The primary structure comprises 607 residues: Terpenoid synthase 29 (607 aa).

5 residues coordinate Mg(2+): D358, D362, N502, T506, and E510. A DDXXD motif motif is present at residues 358-362 (DDTYD).

The protein belongs to the terpene synthase family. Tpsa subfamily. It depends on Mg(2+) as a cofactor. Mn(2+) is required as a cofactor. Predominantly expressed in flowers but also in siliques, roots, leaves and stems.

It localises to the cytoplasm. It functions in the pathway secondary metabolite biosynthesis; terpenoid biosynthesis. This chain is Terpenoid synthase 29 (TPS29), found in Arabidopsis thaliana (Mouse-ear cress).